Consider the following 199-residue polypeptide: uncharacterized protein (199 aa).

The next 4 helical transmembrane spans lie at Cys-35–Asp-55, Phe-57–Phe-77, Leu-94–Gly-114, and Tyr-131–Ala-151.

It localises to the membrane. This is an uncharacterized protein from Caenorhabditis elegans.